Here is a 755-residue protein sequence, read N- to C-terminus: Probable ubiquitin carboxyl-terminal hydrolase creB (755 aa).

The disordered stretch occupies residues Met-1 to Pro-32. The 414-residue stretch at Phe-55–Thr-468 folds into the USP domain. Residue Cys-64 is the Nucleophile of the active site. Disordered regions lie at residues Glu-119–Glu-146 and Glu-237–Thr-270. Over residues Glu-237 to Arg-246 the composition is skewed to basic and acidic residues. Residues Ala-254–Thr-270 are compositionally biased toward polar residues. His-419 acts as the Proton acceptor in catalysis. A disordered region spans residues Thr-495 to Ser-755. Over residues Glu-547–Thr-560 the composition is skewed to low complexity. Residues Lys-577 to Lys-648 are compositionally biased toward basic and acidic residues. Positions Ser-581–Ser-630 form a coiled coil. Over residues Ser-654 to Arg-666 the composition is skewed to basic residues. The segment covering Asn-693–Gly-709 has biased composition (polar residues). A compositionally biased stretch (basic and acidic residues) spans Thr-718–Asp-733. Positions Arg-734 to Ser-755 are enriched in basic residues.

The protein belongs to the peptidase C19 family. As to quaternary structure, interacts with creA, creC and qutD.

The catalysed reaction is Thiol-dependent hydrolysis of ester, thioester, amide, peptide and isopeptide bonds formed by the C-terminal Gly of ubiquitin (a 76-residue protein attached to proteins as an intracellular targeting signal).. Functionally, ubiquitin thioesterase component of the regulatory network controlling carbon source utilization through ubiquitination and deubiquitination involving creA, creB, creC, creD and acrB. Deubiquitinates the creA catabolic repressor and the quinate permease qutD. Also plays a role in response to carbon starvation and the control of extracellular proteases activity. The polypeptide is Probable ubiquitin carboxyl-terminal hydrolase creB (creB) (Aspergillus flavus (strain ATCC 200026 / FGSC A1120 / IAM 13836 / NRRL 3357 / JCM 12722 / SRRC 167)).